A 322-amino-acid polypeptide reads, in one-letter code: Phosphoserine phosphatase (322 aa).

10–12 (PED) serves as a coordination point for substrate. 3 residues coordinate Mg(2+): Asp-12, Asp-116, and Asp-118. The active-site Nucleophile is Asp-116. Asp-118 acts as the Proton donor in catalysis. Substrate-binding positions include Glu-125, Arg-161, 204–205 (SG), and Lys-249. A Mg(2+)-binding site is contributed by Asp-272. Asn-275 serves as a coordination point for substrate.

It belongs to the HAD-like hydrolase superfamily. SerB family. Mg(2+) serves as cofactor.

It carries out the reaction O-phospho-L-serine + H2O = L-serine + phosphate. The catalysed reaction is O-phospho-D-serine + H2O = D-serine + phosphate. It participates in amino-acid biosynthesis; L-serine biosynthesis; L-serine from 3-phospho-D-glycerate: step 3/3. Its function is as follows. Catalyzes the dephosphorylation of phosphoserine (P-Ser). The polypeptide is Phosphoserine phosphatase (serB) (Escherichia coli O157:H7).